The following is a 122-amino-acid chain: Large ribosomal subunit protein bL12 (122 aa).

The protein belongs to the bacterial ribosomal protein bL12 family. In terms of assembly, homodimer. Part of the ribosomal stalk of the 50S ribosomal subunit. Forms a multimeric L10(L12)X complex, where L10 forms an elongated spine to which 2 to 4 L12 dimers bind in a sequential fashion. Binds GTP-bound translation factors.

Forms part of the ribosomal stalk which helps the ribosome interact with GTP-bound translation factors. Is thus essential for accurate translation. The protein is Large ribosomal subunit protein bL12 of Buchnera aphidicola subsp. Baizongia pistaciae (strain Bp).